The following is a 154-amino-acid chain: Ribosome maturation factor RimP (154 aa).

Belongs to the RimP family.

The protein localises to the cytoplasm. In terms of biological role, required for maturation of 30S ribosomal subunits. The polypeptide is Ribosome maturation factor RimP (Prochlorococcus marinus (strain MIT 9313)).